The following is a 143-amino-acid chain: 3-hydroxyacyl-[acyl-carrier-protein] dehydratase FabZ (143 aa).

His-49 is a catalytic residue.

It belongs to the thioester dehydratase family. FabZ subfamily.

The protein localises to the cytoplasm. The catalysed reaction is a (3R)-hydroxyacyl-[ACP] = a (2E)-enoyl-[ACP] + H2O. In terms of biological role, involved in unsaturated fatty acids biosynthesis. Catalyzes the dehydration of short chain beta-hydroxyacyl-ACPs and long chain saturated and unsaturated beta-hydroxyacyl-ACPs. The protein is 3-hydroxyacyl-[acyl-carrier-protein] dehydratase FabZ of Wolbachia pipientis subsp. Culex pipiens (strain wPip).